Reading from the N-terminus, the 134-residue chain is Syncollin (134 aa).

The signal sequence occupies residues Met1–Gly21.

In terms of assembly, monomer and homooligomer; most probably hexameric. Interacts with GP2. According to PubMed:10753942 interaction with syntaxins shown in PubMed:9244306 is physiologically questionable. Contains intrachain disulfide bonds. As to expression, specifically expressed in pancreas and also detected in secretory granules of parotid gland (at protein level). Expressed in pancreas, spleen, small intestine, lung and neutrophilic granulocytes (at protein level). Expressed by epithelial cells in duodenum and colon.

It is found in the zymogen granule membrane. Its subcellular location is the zymogen granule lumen. Its function is as follows. Functions in exocytosis in pancreatic acinar cells regulating the fusion of zymogen granules with each other. May have a pore-forming activity on membranes and regulate exocytosis in other exocrine tissues. This chain is Syncollin (Sycn), found in Rattus norvegicus (Rat).